Here is a 452-residue protein sequence, read N- to C-terminus: Pup--protein ligase (452 aa).

Residue Glu-9 coordinates Mg(2+). Residue Arg-53 participates in ATP binding. Tyr-55 is a binding site for Mg(2+). Residue Asp-57 is the Proton acceptor of the active site. Glu-63 contacts Mg(2+). ATP contacts are provided by Thr-66 and Trp-419.

Belongs to the Pup ligase/Pup deamidase family. Pup-conjugating enzyme subfamily.

The catalysed reaction is ATP + [prokaryotic ubiquitin-like protein]-L-glutamate + [protein]-L-lysine = ADP + phosphate + N(6)-([prokaryotic ubiquitin-like protein]-gamma-L-glutamyl)-[protein]-L-lysine.. The protein operates within protein degradation; proteasomal Pup-dependent pathway. It functions in the pathway protein modification; protein pupylation. In terms of biological role, catalyzes the covalent attachment of the prokaryotic ubiquitin-like protein modifier Pup to the proteasomal substrate proteins, thereby targeting them for proteasomal degradation. This tagging system is termed pupylation. The ligation reaction involves the side-chain carboxylate of the C-terminal glutamate of Pup and the side-chain amino group of a substrate lysine. In Frankia alni (strain DSM 45986 / CECT 9034 / ACN14a), this protein is Pup--protein ligase.